We begin with the raw amino-acid sequence, 419 residues long: Ribosome biogenesis protein WDR12 homolog (419 aa).

Positions 10-91 (VQVHLKTKQE…EDAIDIEYVE (82 aa)) are ubiquitin-like (UBL) domain. WD repeat units follow at residues 103-140 (LHDD…KLTI), 142-184 (GHTA…NAVE), 191-230 (GHER…TSEG), 249-287 (GHRE…IKTE), 289-328 (STNK…GSVV), 334-374 (GHNA…APLY), and 378-416 (GHGE…IENM).

It belongs to the WD repeat WDR12/YTM1 family.

It is found in the nucleus. The protein resides in the nucleolus. It localises to the nucleoplasm. Its function is as follows. Required for maturation of ribosomal RNAs and formation of the large ribosomal subunit. This chain is Ribosome biogenesis protein WDR12 homolog, found in Drosophila virilis (Fruit fly).